Reading from the N-terminus, the 770-residue chain is Lysine-specific histone demethylase 1 (770 aa).

The interval 1–21 (MSSDTGSEYLDEEIRGDELGP) is disordered. In terms of domain architecture, SWIRM spans 28–126 (LAAAASAARL…FGRYVRSTKI (99 aa)). Residue 137-165 (VIVIGAGAAGISAATQLESFGFDVIVLEA) participates in FAD binding. Residues 718-739 (NEAVADIPNAPNAPNAQKPEEI) form a disordered region.

Belongs to the flavin monoamine oxidase family. As to quaternary structure, probably part of a large repressor complex. Interacts with CoREST protein spr-1. Interacts with chromobox protein homolog hpl-1. It depends on FAD as a cofactor.

The protein localises to the nucleus. The enzyme catalyses N(6),N(6)-dimethyl-L-lysyl(4)-[histone H3] + 2 A + 2 H2O = L-lysyl(4)-[histone H3] + 2 formaldehyde + 2 AH2. Its function is as follows. Histone demethylase that specifically demethylates 'Lys-4' of histone H3, a specific tag for epigenetic transcriptional activation, thereby acting as a corepressor. Acts by oxidizing the substrate by FAD to generate the corresponding imine that is subsequently hydrolyzed. Demethylates both mono- and di-methylated 'Lys-4' of histone H3. May be involved in H3 demethylation in mitotic cells including gut and embryonic cells. Participates in the transcriptional repression of the presenilin protein hop-1. May act via the formation of a multiprotein complex that remodel or modify the chromatin. Together with met-2, set-17 and set-26, required for transgenerational fertility. Plays a role in developmental growth and lifespan regulation in response to ultraviolet-induced damage. This chain is Lysine-specific histone demethylase 1, found in Caenorhabditis elegans.